Here is a 2049-residue protein sequence, read N- to C-terminus: MVTVPQTILYFGDQTDSWVDSLDQLYRQAATIPWLQTFLDDLVKVFKEESRGMDRALQDSVGEYSTLLDLADRYRHGTDEIGMVRAVLLHAARGGMLLQWVKKESQLVDLNGSKPEALGISGGLTNLAALAISTDFESLYDAVIEAARIFVRLCRFTSVRSRAMEDRPGVWGWAVLGITPEELSKVLEQFQSSMGIPAIKRAKVGVTGDRWSTVIGPPSVLDLFIHQCPAVRNLPKNELSIHALQHTVTVTEADLDFIVGSAELLSHPIVPDFKVWGMDDPVASYQNWGEMLRAIVTQVLSKPLDITKVIAQLNTHLGPRHVDVRVIGPSSHTPYLASSLKAAGSKAIFQTDKTLEQLQPKKLPPGRIAIVGMAGRGPGCENVDEFWDVIMAKQDRCEEIPKDRFDINEFYCTEHGEGCTTTTKYGCFMNKPGNFDSRFFHVSPREALLMDPGHRQFMMSTYEALETAGYSDGQTRDVDPNRIAAFYGQSNDDWHMVSHYTLGCDAYTLQGAQRAFGAGRIAFHFKWEGPTYSLDSACASTSSAIHLACVSLLSKDVDMAVVGAANVVGYPHSWTSLSKSGVLSDTGNCKTYCDDADGYCRADFVGSVVLKRLEDAVEQNDNILAVVAGSGRNHSGNSSSITTSDAGAQERLFHKIMHSARVSPDEISYVEMHGTGTQIGDPAEMSAVTNVFRKRKANNPLTVGGIKANVGHAEASAGMASLLKCIQMFQKDIMPPQARMPHTLNPKYPSLSELNIHIPSEPKEFKAIGERPRRILLNNFDAAGGNASLILEDFPSTVKENADPRPSHVIVSSAKTQSSYHANKRNLLKWLRKNKDAKLEDVAYTTTARRMHHPLRFSCSASTTEELISKLEADTADATASRGSPVVFVFTGQGSHYAGMGAELYKTCPAFREEVNLCASISEEHGFPPYVDIITNKDVDITTKDTMQTQLAVVTLEIALAAFWKASGIQPSAVMGHSLGEYVALQVAGVLSLADLLYLVGNRARLLLERCEADTCAMLAVSSSAASIRELIDQRPQSSFEIACKNSPNATVISGSTDEISELQSSFTASRARALSVPYGFHSFQMDPMLEDYIVLAGGVTYSPPKIPVASTLLASIVESSGVFNASYLGQQTRQAVDFVGALGALKEKFADPLWLEIGPSQICNSFVRATLSPSPGKILSTLEANTNPWASIAKCLAGAYKDGVAVDWLAVHAPFKGGLKLVKLPAYAWDLKDFWIVYSEANKAARALAPAPSFETQRISTCAQQIVEESSSPSLHVSARAAISDPGFMALVDGHRMRDVSICPGSVFCEAGLAVSKYALKYSGRKDTVETRLTINNLSLKRPLTKSLVGTDGELLTTVVADKASSDTLQVSWKASSSHASYDLGSCEITICDAQTLQTSWNRSSYFVKARMNELIKNVKSGNGHRMLPSILYTLFASTVDYDPTFKSVKEAFISNEFDEAAAEVVLQKNPAGTQFFASPYWGESVVHLAGFLVNSNPARKTASQTTFMMQSLESVEQTADLEAGRTYYTYARVLHEEEDTVSCDLFVFDSEKMVMQCSGLSFHEVSNNVLDRLLGKASPPVKQVSHQKAPVLVPAESKPALKAAVEAAPKAPEPVKTEVKKISSSESELFHTILESIAKETGTQVSDFTDDMELAELGVDSIMGIEIAAGVSSRTGLDVLLPSFVVDYPTIGDLRNEFARSSTSTPPSKTFSEFSIVDATPESTRSSSRAPSEKKEPAPASEKSEELVIVPSAVVEDSSPLPSARITLIQGRSSSGKQPFYLIADGAGSIATYIHLAPFKDKRPVYGIDSPFLRCPSRLTTQVGIEGVAKIIFEALIKCQPEGPFDLGGFSGGAMLSYEVSRQLAAAGRVVSSLLLIDMCSPRPLGVEDTIEVGWKVYETIASQDKLWNASSNTQQHLKAVFACVAAYHPPPITPAQRPKRTAIIWAKKGMVDRCSRDEKVMKFLADKGIPTESYPGFMEDPKLGAVAWGLPHKSAADLGPNGWDKFLGETLCLSIDSDHLDMPMPGHVHLLQAAMEESFKYFSEAN.

Positions leucine 9–histidine 246 are N-terminal acylcarrier protein transacylase (SAT) domain. One can recognise a Ketosynthase family 3 (KS3) domain in the interval proline 365–aspartate 793. Active-site for beta-ketoacyl synthase activity residues include cysteine 538, histidine 673, and histidine 712. Residues valine 887–leucine 1146 are malonyl-CoA:ACP transacylase (MAT) domain. Catalysis depends on serine 978, which acts as the For acyl/malonyl transferase activity. The segment at glutamine 1265 to arginine 1404 is N-terminal hotdog fold. One can recognise a PKS/mFAS DH domain in the interval glutamine 1265–aspartate 1573. The interval glutamate 1269–leucine 1572 is product template (PT) domain. The tract at residues glycine 1425–aspartate 1573 is C-terminal hotdog fold. The Carrier domain occupies serine 1626 to serine 1704. The residue at position 1663 (serine 1663) is an O-(pantetheine 4'-phosphoryl)serine. The tract at residues phenylalanine 1700–glutamate 1747 is disordered. Residues serine 1703 to serine 1717 are compositionally biased toward low complexity. The span at proline 1723–alanine 1732 shows a compositional bias: polar residues. Basic and acidic residues predominate over residues proline 1733–glutamate 1747. The tract at residues serine 1761 to lysine 1951 is thioesterase (TE) domain.

It participates in secondary metabolite biosynthesis. Its function is as follows. Non-reducing polyketide synthase; part of the gene cluster that mediates the biosynthesis of hypothemycin, a resorcylic acid lactone (RAL) that irreversibly inhibits a subset of protein kinases with a conserved cysteine in the ATP binding site such as human ERK2. The first step is performed by both PKSs hmp3 and hmp8 and leads to the production of 7',8'-dehydrozearalenol (DHZ). The highly reducing PKS hpm8 synthesizes the reduced hexaketide (7S,11S,2E,8E)-7,11-dihydroxy-dodeca-2,8-dienoate, which is transferred downstream to the non-reducing PKS hpm3. Hpm3 then extends the reduced hexaketide to a nonaketide, after which regioselective cyclization and macrolactonization affords DHZ. The next step is the conversion of DHZ into aigialomycin C and is performed by the O-methyltransferase hmp5, the FAD-binding monooxygenase hmp7, and the cytochrome P450 monooxygenase hmp1. The wide substrate tolerance of the hmp5 and hmp7 implies that the reactions from DHZ to aigialomycin C can occur in any order. The steps from aigialomycin C to hypothemycin are less well established. The FAD-linked oxidoreductase hmp9 presumably catalyzes oxidation of the C-6' hydroxyl to a ketone. The timing of this oxidation is important, since the resulting enone functional group is a Michael acceptor that can react spontaneously with glutathione, an abundant metabolite in fungal cells. The glutathione S-transferase hmp2 catalyzes cis-trans isomerization of the 7',8' double bond with equilibrium favoring the trans isomer. The hpm6-encoded transporter might preferentially pump hypothemycin out of the cell relative to the trans isomer aigialomycin A. The cis-to-trans isomerization may be coupled with C-4' hydroxylation, since all known hypothemycin analogs containing the enone functional group also have hydroxyl groups at both C-4' and C-5'. This is Non-reducing polyketide synthase hmp3 from Hypomyces subiculosus (Nectria subiculosa).